We begin with the raw amino-acid sequence, 272 residues long: Phosphatidylglycerol--prolipoprotein diacylglyceryl transferase (272 aa).

A run of 4 helical transmembrane segments spans residues Trp-24–Val-44, Leu-64–Tyr-84, Leu-99–Leu-119, and Gly-125–Leu-145. Arg-147 lines the a 1,2-diacyl-sn-glycero-3-phospho-(1'-sn-glycerol) pocket. 3 consecutive transmembrane segments (helical) span residues Ala-185–Leu-205, Gly-209–Phe-229, and Met-245–Tyr-265.

This sequence belongs to the Lgt family.

The protein localises to the cell inner membrane. It carries out the reaction L-cysteinyl-[prolipoprotein] + a 1,2-diacyl-sn-glycero-3-phospho-(1'-sn-glycerol) = an S-1,2-diacyl-sn-glyceryl-L-cysteinyl-[prolipoprotein] + sn-glycerol 1-phosphate + H(+). It participates in protein modification; lipoprotein biosynthesis (diacylglyceryl transfer). Its function is as follows. Catalyzes the transfer of the diacylglyceryl group from phosphatidylglycerol to the sulfhydryl group of the N-terminal cysteine of a prolipoprotein, the first step in the formation of mature lipoproteins. This chain is Phosphatidylglycerol--prolipoprotein diacylglyceryl transferase, found in Methylocella silvestris (strain DSM 15510 / CIP 108128 / LMG 27833 / NCIMB 13906 / BL2).